Reading from the N-terminus, the 146-residue chain is Anti-sigma F factor (146 aa).

It belongs to the anti-sigma-factor family.

It catalyses the reaction L-seryl-[protein] + ATP = O-phospho-L-seryl-[protein] + ADP + H(+). It carries out the reaction L-threonyl-[protein] + ATP = O-phospho-L-threonyl-[protein] + ADP + H(+). Its function is as follows. Binds to sigma F and blocks its ability to form an RNA polymerase holoenzyme (E-sigma F). Phosphorylates SpoIIAA on a serine residue. This phosphorylation may enable SpoIIAA to act as an anti-anti-sigma factor that counteracts SpoIIAB and thus releases sigma F from inhibition. In Oceanobacillus iheyensis (strain DSM 14371 / CIP 107618 / JCM 11309 / KCTC 3954 / HTE831), this protein is Anti-sigma F factor.